A 126-amino-acid polypeptide reads, in one-letter code: Adult-specific rigid cuticular protein 12.4 (126 aa).

The 79-residue stretch at 9 to 87 folds into the Chitin-binding type R&amp;R domain; it reads GGAYNFGFNT…AMAALAPKAP (79 aa).

Functionally, component of the rigid cuticle of the spider. The sequence is that of Adult-specific rigid cuticular protein 12.4 from Araneus diadematus (European garden spider).